Here is a 102-residue protein sequence, read N- to C-terminus: Small ribosomal subunit protein uS10 (102 aa).

This sequence belongs to the universal ribosomal protein uS10 family. As to quaternary structure, part of the 30S ribosomal subunit.

In terms of biological role, involved in the binding of tRNA to the ribosomes. The chain is Small ribosomal subunit protein uS10 from Streptococcus mutans serotype c (strain ATCC 700610 / UA159).